The primary structure comprises 276 residues: 2,3,4,5-tetrahydropyridine-2,6-dicarboxylate N-succinyltransferase (276 aa).

Residues Arg-104 and Asp-141 each contribute to the substrate site.

It belongs to the transferase hexapeptide repeat family. In terms of assembly, homotrimer.

The protein localises to the cytoplasm. It catalyses the reaction (S)-2,3,4,5-tetrahydrodipicolinate + succinyl-CoA + H2O = (S)-2-succinylamino-6-oxoheptanedioate + CoA. It functions in the pathway amino-acid biosynthesis; L-lysine biosynthesis via DAP pathway; LL-2,6-diaminopimelate from (S)-tetrahydrodipicolinate (succinylase route): step 1/3. This chain is 2,3,4,5-tetrahydropyridine-2,6-dicarboxylate N-succinyltransferase, found in Pseudoalteromonas translucida (strain TAC 125).